Consider the following 179-residue polypeptide: Large ribosomal subunit protein uL6c (179 aa).

Belongs to the universal ribosomal protein uL6 family. As to quaternary structure, part of the 50S ribosomal subunit.

The protein resides in the plastid. Its subcellular location is the chloroplast. Its function is as follows. Binds 23S rRNA. This is Large ribosomal subunit protein uL6c (rpl6) from Guillardia theta (Cryptophyte).